Consider the following 289-residue polypeptide: 4-hydroxy-3-methylbut-2-enyl diphosphate reductase (289 aa).

Residue C13 participates in [4Fe-4S] cluster binding. H41 and H75 together coordinate (2E)-4-hydroxy-3-methylbut-2-enyl diphosphate. H41 and H75 together coordinate dimethylallyl diphosphate. H41 and H75 together coordinate isopentenyl diphosphate. C97 contributes to the [4Fe-4S] cluster binding site. H129 contacts (2E)-4-hydroxy-3-methylbut-2-enyl diphosphate. H129 serves as a coordination point for dimethylallyl diphosphate. An isopentenyl diphosphate-binding site is contributed by H129. Residue E131 is the Proton donor of the active site. Residue T167 coordinates (2E)-4-hydroxy-3-methylbut-2-enyl diphosphate. C198 is a binding site for [4Fe-4S] cluster. Residues S226, S227, N228, and S270 each contribute to the (2E)-4-hydroxy-3-methylbut-2-enyl diphosphate site. Dimethylallyl diphosphate is bound by residues S226, S227, N228, and S270. 4 residues coordinate isopentenyl diphosphate: S226, S227, N228, and S270.

The protein belongs to the IspH family. [4Fe-4S] cluster is required as a cofactor.

The catalysed reaction is isopentenyl diphosphate + 2 oxidized [2Fe-2S]-[ferredoxin] + H2O = (2E)-4-hydroxy-3-methylbut-2-enyl diphosphate + 2 reduced [2Fe-2S]-[ferredoxin] + 2 H(+). It carries out the reaction dimethylallyl diphosphate + 2 oxidized [2Fe-2S]-[ferredoxin] + H2O = (2E)-4-hydroxy-3-methylbut-2-enyl diphosphate + 2 reduced [2Fe-2S]-[ferredoxin] + 2 H(+). Its pathway is isoprenoid biosynthesis; dimethylallyl diphosphate biosynthesis; dimethylallyl diphosphate from (2E)-4-hydroxy-3-methylbutenyl diphosphate: step 1/1. It functions in the pathway isoprenoid biosynthesis; isopentenyl diphosphate biosynthesis via DXP pathway; isopentenyl diphosphate from 1-deoxy-D-xylulose 5-phosphate: step 6/6. In terms of biological role, catalyzes the conversion of 1-hydroxy-2-methyl-2-(E)-butenyl 4-diphosphate (HMBPP) into a mixture of isopentenyl diphosphate (IPP) and dimethylallyl diphosphate (DMAPP). Acts in the terminal step of the DOXP/MEP pathway for isoprenoid precursor biosynthesis. This is 4-hydroxy-3-methylbut-2-enyl diphosphate reductase from Bacteroides thetaiotaomicron (strain ATCC 29148 / DSM 2079 / JCM 5827 / CCUG 10774 / NCTC 10582 / VPI-5482 / E50).